The chain runs to 319 residues: Olfactory receptor 10Q1 (319 aa).

The Extracellular portion of the chain corresponds to 1–29; it reads MPVGKLVFNQSEPTEFVFRAFTTATEFQV. The N-linked (GlcNAc...) asparagine glycan is linked to Asn-9. The helical transmembrane segment at 30–50 threads the bilayer; sequence LLFLLFLLLYLMILCGNTAII. The Cytoplasmic portion of the chain corresponds to 51–58; the sequence is WVVCTHST. Residues 59-79 form a helical membrane-spanning segment; it reads LRTPMYFFLSNLSFLELCYTT. Residues 80 to 103 lie on the Extracellular side of the membrane; sequence VVVPLMLSNILGAQKPISLAGCGA. Cys-101 and Cys-194 are disulfide-bonded. A helical transmembrane segment spans residues 104 to 124; the sequence is QMFFFVTLGSTDCFLLAIMAY. Over 125–143 the chain is Cytoplasmic; sequence DRYVAICHPLHYTLIMTRE. A helical membrane pass occupies residues 144-164; sequence LCTQMLGGALGLALFPSLQLT. Residues 165–202 are Extracellular-facing; sequence ALIFTLPFCGHHQEINHFLCDVPPVLRLACADIRVHQA. A helical membrane pass occupies residues 203–222; that stretch reads VLYVVSILVLTIPFLLICVS. Topologically, residues 223–242 are cytoplasmic; that stretch reads YVFITCAILSIRSAEGRRRA. The helical transmembrane segment at 243-263 threads the bilayer; sequence FSTCSFHLTVVLLQYGCCSLV. At 264 to 276 the chain is on the extracellular side; it reads YLRPRSSTSEDED. The chain crosses the membrane as a helical span at residues 277-297; sequence SQIALVYTFVTPLLNPLLYSL. Residues 298–319 are Cytoplasmic-facing; that stretch reads RNKDVKGALRSAIIRKAASDAN.

Belongs to the G-protein coupled receptor 1 family.

Its subcellular location is the cell membrane. Odorant receptor. This is Olfactory receptor 10Q1 (OR10Q1) from Homo sapiens (Human).